Consider the following 357-residue polypeptide: MTDRNISLTYAGAGVDIDAGNRLVDLIKPMVRATARAGAEAEIGGFGGLFDLKAAGFADPVLVAANDGVGTKVKIAIETGIHDTIGIDLVAMSVNDLVVQGAEPLFFLDYFACGKLDPETAAAIVAGIAEGCREAGCALIGGETAEMPGLYKDGDYDLAGFAVGAAERGSLLPGRDIAAGDAVIGLASSGVHSNGYSLVRNIVEASGIALSAPAPFAPVATLGGALLTPTRLYVKSCLRAIRETGAVKGLAHITGGGFTDNIPRVLPEGLGVRIDLAGLTVLPVFKWLAQQGRVVEREMLRTFNCGIGMVAIVRRDAVQQVVDVLTQAGERVSLLGDVIVAGDEGRVVYDGQLDLAV.

This sequence belongs to the AIR synthase family.

It is found in the cytoplasm. It carries out the reaction 2-formamido-N(1)-(5-O-phospho-beta-D-ribosyl)acetamidine + ATP = 5-amino-1-(5-phospho-beta-D-ribosyl)imidazole + ADP + phosphate + H(+). The protein operates within purine metabolism; IMP biosynthesis via de novo pathway; 5-amino-1-(5-phospho-D-ribosyl)imidazole from N(2)-formyl-N(1)-(5-phospho-D-ribosyl)glycinamide: step 2/2. The sequence is that of Phosphoribosylformylglycinamidine cyclo-ligase from Nitrobacter winogradskyi (strain ATCC 25391 / DSM 10237 / CIP 104748 / NCIMB 11846 / Nb-255).